The following is a 543-amino-acid chain: Kelch repeat and BTB domain-containing protein 4 (543 aa).

A BTB domain is found at 70–137; sequence ADVTISVEGR…IYHGTVKLRA (68 aa). The BACK domain maps to 172–264; the sequence is CLQVMWLADR…SLKEIGENVH (93 aa). 5 Kelch repeats span residues 264–310, 311–353, 356–403, 405–455, and 457–505; these read HIYL…KHGG, DLYV…SVPG, AIYS…NLNG, IYLL…VHKD, and VFIV…YVFR.

In terms of assembly, component of the BCR(KBTBD4) E3 ubiquitin ligase complex, at least composed of CUL3, KBTBD4 and RBX1.

Functionally, substrate-specific adapter of a BCR (BTB-CUL3-RBX1) E3 ubiquitin ligase complex which targets CoREST corepressor complex components RCOR1, KDM1A/LSD1 and HDAC2 for proteasomal degradation. RCOR1 is likely to be the primary target while degradation of KDM1A and HDAC2 is likely due to their association with RCOR1. Also targets RCOR3, MIER2 and MIER3 for proteasomal degradation as well as associated proteins ZNF217 and RREB1. Degradation is dependent on the presence of an ELM2 domain in the target proteins. The sequence is that of Kelch repeat and BTB domain-containing protein 4 (KBTBD4) from Macaca fascicularis (Crab-eating macaque).